The chain runs to 292 residues: Elongation factor Ts (292 aa).

The interval 80–83 is involved in Mg(2+) ion dislocation from EF-Tu; it reads TDFV.

It belongs to the EF-Ts family.

It localises to the cytoplasm. Its function is as follows. Associates with the EF-Tu.GDP complex and induces the exchange of GDP to GTP. It remains bound to the aminoacyl-tRNA.EF-Tu.GTP complex up to the GTP hydrolysis stage on the ribosome. The chain is Elongation factor Ts from Cupriavidus taiwanensis (strain DSM 17343 / BCRC 17206 / CCUG 44338 / CIP 107171 / LMG 19424 / R1) (Ralstonia taiwanensis (strain LMG 19424)).